We begin with the raw amino-acid sequence, 1014 residues long: Isoleucine--tRNA ligase (1014 aa).

The short motif at 48-58 is the 'HIGH' region element; it reads PTANGRPGIHH. Residues 628–632 carry the 'KMSKS' region motif; sequence KMSKS. Position 631 (lysine 631) interacts with ATP.

Belongs to the class-I aminoacyl-tRNA synthetase family. IleS type 2 subfamily. In terms of assembly, monomer. It depends on Zn(2+) as a cofactor.

Its subcellular location is the cytoplasm. It catalyses the reaction tRNA(Ile) + L-isoleucine + ATP = L-isoleucyl-tRNA(Ile) + AMP + diphosphate. Functionally, catalyzes the attachment of isoleucine to tRNA(Ile). As IleRS can inadvertently accommodate and process structurally similar amino acids such as valine, to avoid such errors it has two additional distinct tRNA(Ile)-dependent editing activities. One activity is designated as 'pretransfer' editing and involves the hydrolysis of activated Val-AMP. The other activity is designated 'posttransfer' editing and involves deacylation of mischarged Val-tRNA(Ile). This Dehalococcoides mccartyi (strain ATCC BAA-2266 / KCTC 15142 / 195) (Dehalococcoides ethenogenes (strain 195)) protein is Isoleucine--tRNA ligase.